The primary structure comprises 2567 residues: Highly reducing polyketide synthase sor1 (2567 aa).

In terms of domain architecture, Ketosynthase family 3 (KS3) spans S14–D436. Catalysis depends on for beta-ketoacyl synthase activity residues C187, H322, and H359. Residues V550–L841 are malonyl-CoA:ACP transacylase (MAT) domain. The segment at H939–S1079 is N-terminal hotdog fold. The dehydratase (DH) domain stretch occupies residues H939–S1249. Positions H939 to L1252 constitute a PKS/mFAS DH domain. Residue H971 is the Proton acceptor; for dehydratase activity of the active site. A C-terminal hotdog fold region spans residues Y1095–L1252. D1161 serves as the catalytic Proton donor; for dehydratase activity. A methyltransferase (CMet) domain region spans residues L1426 to L1534. The tract at residues F1852–L2163 is enoyl reductase (ER) domain. The interval A2187 to D2369 is ketoreductase (KR) domain. The 78-residue stretch at E2481–S2558 folds into the Carrier domain. S2518 is subject to O-(pantetheine 4'-phosphoryl)serine.

The protein operates within secondary metabolite biosynthesis. Highly reducing polyketide synthase; part of the SOR gene cluster that mediates the biosynthesis of sorbicillinoids, a diverse group of yellow secondary metabolites that restrict growth of competing pathogenic fungi but not of bacteria. Sorbicillinoids biosynthesis requires the action of two PKSs. The SOR cluster is required for the production of trichodimerol and dihydrotrichotetronin, with sor2 being sufficient for production of trichodimerol, but not dihydrotrichotetronin in the light. Sor1 iteratively combines three acetyl units and the growing chain is modified by the ketoacyl reductase subunit, and optional by the enoyl reductase subunit in the second cycle. The polyketide is then handed over to the PKS sor2, which adds three more acetyl units, and two methyl groups. Sor2 releases an aldehyde, which undergoes spontaneous cyclization resulting in the formation of sorbicillin or 2',3'-dihydrosorbicillin. The monooxygenase sor5 oxidizes sorbicillin and 2',3'-dihydrosorbicillin to 2',3'-dihydrosorbicillinol and sorbicillinol, respectively. The oxidoreductase sor8 further converts sorbicillinol into oxosorbicillinol. Sorbicillinol is the building block for the other sorbicillinoids such as disorbicillinol, bisvertinolon, dihydrobisvertinolone, and dihydrotrichotetronine. The protein is Highly reducing polyketide synthase sor1 of Hypocrea jecorina (strain QM6a) (Trichoderma reesei).